We begin with the raw amino-acid sequence, 165 residues long: Endolysin (165 aa).

Residue Glu21 is part of the active site.

This sequence belongs to the glycosyl hydrolase 24 family. In terms of assembly, monomer.

The protein localises to the host cytoplasm. The enzyme catalyses Endolytic cleavage of the (1-&gt;4)-beta-glycosidic linkage between N-acetylmuramic acid (MurNAc) and N-acetylglucosamine (GlcNAc) residues in peptidoglycan with concomitant formation of a 1,6-anhydrobond in the MurNAc residue.. Its function is as follows. Endolysin with transglycosylase activity that degrades host peptidoglycans and participates with the holin and spanin proteins in the sequential events which lead to the programmed host cell lysis releasing the mature viral particles. Once the holin has permeabilized the host cell membrane, the endolysin can reach the periplasm and break down the peptidoglycan layer. This is Endolysin (K) from Enterobacteriaceae (Bacteriophage P2).